Consider the following 210-residue polypeptide: Thioredoxin-like 3-1, chloroplastic (210 aa).

Residues 81–210 enclose the Thioredoxin domain; that stretch reads WRLKAFWSNI…EVRELINKFV (130 aa). Catalysis depends on nucleophile residues cysteine 130 and cysteine 133. A disulfide bond links cysteine 130 and cysteine 133.

Belongs to the thioredoxin family.

It is found in the plastid. The protein resides in the chloroplast stroma. Functionally, probable thiol-disulfide oxidoreductase that may participate in various redox reactions. The chain is Thioredoxin-like 3-1, chloroplastic (WCRKC1) from Arabidopsis thaliana (Mouse-ear cress).